Reading from the N-terminus, the 297-residue chain is Protein MIZU-KUSSEI 1 (297 aa).

In terms of tissue distribution, expressed in root meristematic region, cortical cells, lateral root cap cells, columella cells of the root cap, mature region of the roots and leaf hydathodes.

The protein resides in the endoplasmic reticulum membrane. Functionally, plays a role in lateral root development by maintaining auxin levels. This function requires GNOM (GN/MIZ2) activity. Negatively regulates cytokinin sensitivity on root development. Positively regulates hydrotropism in roots. The polypeptide is Protein MIZU-KUSSEI 1 (MIZ1) (Arabidopsis thaliana (Mouse-ear cress)).